Reading from the N-terminus, the 783-residue chain is Polyribonucleotide nucleotidyltransferase 1, mitochondrial (783 aa).

Residues 1-45 constitute a mitochondrion transit peptide; that stretch reads MAACRLCCLCPCLRPLGCGPLGRPGRNRALSYLQMRALWSSTGSR. N6-acetyllysine is present on residues Lys250, Lys264, and Lys285. Lys552 carries the N6-succinyllysine modification. The 60-residue stretch at 605-664 folds into the KH domain; the sequence is PVVETVKVPLSKRAKFVGPGGYHLKKLQAETGVTISQVDEETFSIFAPTPTAMHEARDFI. Positions 679 to 750 constitute an S1 motif domain; the sequence is GAVYTATITE…ADGRMRLSRK (72 aa). Ser754 bears the Phosphoserine mark.

Belongs to the polyribonucleotide nucleotidyltransferase family. As to quaternary structure, homotrimer; in free form. Homooligomer. Component of the mitochondrial degradosome (mtEXO) complex which is a heteropentamer containing 2 copies of SUPV3L1 and 3 copies of PNPT1. As part of the mitochondrial degradosome complex, interacts with GRSF1 in an RNA-dependent manner; the interaction enhances the activity of the complex. Interacts with TCL1A; the interaction has no effect on PNPT1 exonuclease activity.

The protein localises to the cytoplasm. The protein resides in the mitochondrion matrix. Its subcellular location is the mitochondrion intermembrane space. It carries out the reaction RNA(n+1) + phosphate = RNA(n) + a ribonucleoside 5'-diphosphate. Functionally, RNA-binding protein implicated in numerous RNA metabolic processes. Catalyzes the phosphorolysis of single-stranded polyribonucleotides processively in the 3'-to-5' direction. Mitochondrial intermembrane factor with RNA-processing exoribonulease activity. Component of the mitochondrial degradosome (mtEXO) complex, that degrades 3' overhang double-stranded RNA with a 3'-to-5' directionality in an ATP-dependent manner. Involved in the degradation of non-coding mitochondrial transcripts (MT-ncRNA) and tRNA-like molecules. Required for correct processing and polyadenylation of mitochondrial mRNAs. Plays a role as a cytoplasmic RNA import factor that mediates the translocation of small RNA components, like the 5S RNA, the RNA subunit of ribonuclease P and the mitochondrial RNA-processing (MRP) RNA, into the mitochondrial matrix. Plays a role in mitochondrial morphogenesis and respiration; regulates the expression of the electron transport chain (ETC) components at the mRNA and protein levels. In the cytoplasm, shows a 3'-to-5' exoribonuclease mediating mRNA degradation activity; degrades c-myc mRNA upon treatment with IFNB1/IFN-beta, resulting in a growth arrest in melanoma cells. Regulates the stability of specific mature miRNAs in melanoma cells; specifically and selectively degrades miR-221, preferentially. Also plays a role in RNA cell surveillance by cleaning up oxidized RNAs. Binds to the RNA subunit of ribonuclease P, MRP RNA and miR-221 microRNA. This Mus musculus (Mouse) protein is Polyribonucleotide nucleotidyltransferase 1, mitochondrial (Pnpt1).